We begin with the raw amino-acid sequence, 398 residues long: Succinate--CoA ligase [ADP-forming] subunit beta (398 aa).

The region spanning 9–254 is the ATP-grasp domain; sequence KRLLHEYGAP…TSEEDPKEIE (246 aa). ATP is bound by residues lysine 46, 53–55, glutamate 109, alanine 112, and glutamate 117; that span reads GRG. Positions 209 and 223 each coordinate Mg(2+). Residues asparagine 274 and 331–333 each bind substrate; that span reads GIM.

The protein belongs to the succinate/malate CoA ligase beta subunit family. As to quaternary structure, heterotetramer of two alpha and two beta subunits. Requires Mg(2+) as cofactor.

The enzyme catalyses succinate + ATP + CoA = succinyl-CoA + ADP + phosphate. It catalyses the reaction GTP + succinate + CoA = succinyl-CoA + GDP + phosphate. It participates in carbohydrate metabolism; tricarboxylic acid cycle; succinate from succinyl-CoA (ligase route): step 1/1. Succinyl-CoA synthetase functions in the citric acid cycle (TCA), coupling the hydrolysis of succinyl-CoA to the synthesis of either ATP or GTP and thus represents the only step of substrate-level phosphorylation in the TCA. The beta subunit provides nucleotide specificity of the enzyme and binds the substrate succinate, while the binding sites for coenzyme A and phosphate are found in the alpha subunit. This chain is Succinate--CoA ligase [ADP-forming] subunit beta, found in Bartonella henselae (strain ATCC 49882 / DSM 28221 / CCUG 30454 / Houston 1) (Rochalimaea henselae).